A 94-amino-acid polypeptide reads, in one-letter code: Small ribosomal subunit protein bS6 (94 aa).

It belongs to the bacterial ribosomal protein bS6 family.

In terms of biological role, binds together with bS18 to 16S ribosomal RNA. This chain is Small ribosomal subunit protein bS6, found in Clostridium botulinum (strain Kyoto / Type A2).